Consider the following 349-residue polypeptide: Probable dual-specificity RNA methyltransferase RlmN (349 aa).

The Proton acceptor role is filled by Glu-94. The Radical SAM core domain maps to 100-334 (TETRTTACVS…VKVRRSRGKD (235 aa)). Cys-107 and Cys-339 form a disulfide bridge. [4Fe-4S] cluster-binding residues include Cys-114, Cys-118, and Cys-121. S-adenosyl-L-methionine is bound by residues 165–166 (GE), Ser-197, 220–222 (SLH), and Asn-296. Cys-339 functions as the S-methylcysteine intermediate in the catalytic mechanism.

Belongs to the radical SAM superfamily. RlmN family. It depends on [4Fe-4S] cluster as a cofactor.

The protein resides in the cytoplasm. The enzyme catalyses adenosine(2503) in 23S rRNA + 2 reduced [2Fe-2S]-[ferredoxin] + 2 S-adenosyl-L-methionine = 2-methyladenosine(2503) in 23S rRNA + 5'-deoxyadenosine + L-methionine + 2 oxidized [2Fe-2S]-[ferredoxin] + S-adenosyl-L-homocysteine. It catalyses the reaction adenosine(37) in tRNA + 2 reduced [2Fe-2S]-[ferredoxin] + 2 S-adenosyl-L-methionine = 2-methyladenosine(37) in tRNA + 5'-deoxyadenosine + L-methionine + 2 oxidized [2Fe-2S]-[ferredoxin] + S-adenosyl-L-homocysteine. In terms of biological role, specifically methylates position 2 of adenine 2503 in 23S rRNA and position 2 of adenine 37 in tRNAs. In Flavobacterium johnsoniae (strain ATCC 17061 / DSM 2064 / JCM 8514 / BCRC 14874 / CCUG 350202 / NBRC 14942 / NCIMB 11054 / UW101) (Cytophaga johnsonae), this protein is Probable dual-specificity RNA methyltransferase RlmN.